Here is a 713-residue protein sequence, read N- to C-terminus: Glycine--tRNA ligase beta subunit (713 aa).

The protein belongs to the class-II aminoacyl-tRNA synthetase family. Tetramer of two alpha and two beta subunits.

The protein localises to the cytoplasm. It catalyses the reaction tRNA(Gly) + glycine + ATP = glycyl-tRNA(Gly) + AMP + diphosphate. This is Glycine--tRNA ligase beta subunit from Leptothrix cholodnii (strain ATCC 51168 / LMG 8142 / SP-6) (Leptothrix discophora (strain SP-6)).